The following is a 213-amino-acid chain: MLLPTVRSRIAALSSRVASRAAYSTTVPRFTENAMQPNDPTPRPAKPNVSETDATPVDSMGAWDAALQESTDAAERVRTMQAPNRKGTWASNQKPRAEAMSGPRFEQTIMHLQPTPMAAIELIHKQPVRWVKDKIVSCDGGGGPLGHPRIFINTDKPEIVPCGYCGLPFAHEHHREYLKSLPTSSYPLEPTGAAEEVNENQRVTEGATGYEQR.

Residues P28–N38 show a composition bias toward polar residues. Disordered stretches follow at residues P28–P56 and P182–R213.

This chain is Lactobacillus shifted protein (lbsA), found in Emericella nidulans (strain FGSC A4 / ATCC 38163 / CBS 112.46 / NRRL 194 / M139) (Aspergillus nidulans).